A 701-amino-acid polypeptide reads, in one-letter code: MSQEKKVFKTEWANRPLSIETGQMAKQANGAVLVRYGDTVVLSTATASKEPRDGDFFPLMVNYEEKMYAAGKIPGGFKKREGRPADEATLTARLIDRPIRPLFPKGYRHDVQIINMVLSADPDCSPEMAAMIGSSMALSVSDIPFQGPIAGVNVGYIDGEYVINPTVEQKEVSRLDLEVAGHRDAVNMVEAGASEITEKEMLDAIFFGHEEIKRLVDFQQEIIDYLQPEKTEFIPKERNAEVEEKVTALTEEKGLKDAIQTFDKKEREENIDAIRDEVVAEFEDEENPDNDEVIAEVNSILNDLVKEEVRRQIADEKVRPDGRKPDEIRPLDSEVGLLPRAHGSGLFTRGQTQALSVLTLGAMSEYQLIDGLGTEEEKRFMHHYNFPNFSVGETGPVRAPGRREIGHGALGERALRYIIPDTKDFPYTVRIVSEVLESNGSSSQASICGSTLALMDAGVPIKAPVAGIAMGLVTRDDNYTILTDIQGMEDALGDMDFKVAGTEKGITAIQMDIKIDGLTREIIEEALEQARVGRLTILNHMLETIDQPRPELSAYAPKVETMTIKPEKIRDVIGPGGKKINEIIDETGVKLDIEQDGTIFIGAVDQDMINRAREIIEDITREAEVGQVYNAKVRRIEKYGTFVELFPGKDALLHISQIANQRINKVEDVLKLGDTIEVKVTEIDDKGRVNASHRALLNKED.

Residues Asp-490 and Asp-496 each coordinate Mg(2+). The region spanning 557–616 (PKVETMTIKPEKIRDVIGPGGKKINEIIDETGVKLDIEQDGTIFIGAVDQDMINRAREII) is the KH domain. The 69-residue stretch at 626–694 (GQVYNAKVRR…DKGRVNASHR (69 aa)) folds into the S1 motif domain.

The protein belongs to the polyribonucleotide nucleotidyltransferase family. Mg(2+) is required as a cofactor.

It is found in the cytoplasm. The catalysed reaction is RNA(n+1) + phosphate = RNA(n) + a ribonucleoside 5'-diphosphate. In terms of biological role, involved in mRNA degradation. Catalyzes the phosphorolysis of single-stranded polyribonucleotides processively in the 3'- to 5'-direction. This Staphylococcus carnosus (strain TM300) protein is Polyribonucleotide nucleotidyltransferase.